The following is a 295-amino-acid chain: Xyloglucan endotransglucosylase/hydrolase (295 aa).

The N-terminal stretch at 1 to 23 (MAVSSTPWALVALFLMASSTVMA) is a signal peptide. One can recognise a GH16 domain in the interval 25 to 222 (PPRKAIDVPF…WANAPFIASY (198 aa)). Glutamate 108 functions as the Nucleophile in the catalytic mechanism. Glutamate 112 functions as the Proton donor in the catalytic mechanism. Glutamate 112 contributes to the xyloglucan binding site. Asparagine 116 carries N-linked (GlcNAc...) asparagine glycosylation. Residues 125-127 (QTN), 135-137 (NRE), 201-202 (DW), and glycine 206 contribute to the xyloglucan site. Disulfide bonds link cysteine 230/cysteine 239 and cysteine 276/cysteine 289. Arginine 281 contacts xyloglucan.

The protein belongs to the glycosyl hydrolase 16 family. XTH group 1 subfamily. Contains at least one intrachain disulfide bond essential for its enzymatic activity. Post-translationally, the N-glycan consists of an (GlcNAc)2(Hex)6 oligosaccharide; not essential for its enzymatic activity.

Its subcellular location is the secreted. The protein localises to the cell wall. The protein resides in the extracellular space. It is found in the apoplast. The catalysed reaction is breaks a beta-(1-&gt;4) bond in the backbone of a xyloglucan and transfers the xyloglucanyl segment on to O-4 of the non-reducing terminal glucose residue of an acceptor, which can be a xyloglucan or an oligosaccharide of xyloglucan.. In terms of biological role, catalyzes xyloglucan endohydrolysis (XEH) and/or endotransglycosylation (XET). Cleaves and religates xyloglucan polymers, an essential constituent of the primary cell wall, and thereby participates in cell wall construction of growing tissues. In Brassica oleracea var. botrytis (Cauliflower), this protein is Xyloglucan endotransglucosylase/hydrolase (XET16A).